The primary structure comprises 421 residues: MEEENVTSSPSTPVHRLRHRRRSNEVVTDGDKVNASPLLVNDRNKYKSFMVRTYSTLWMIGGFVLVVYMGHLYITAMVVVIQIFMAKELFNLLRKAPEDKCLPYIKQLNWHFFFTAMLFVYGRILSQRLANTMTADQFFYRLVSGLIKYHMAICYLLYIIGFMWFILTLKKKMYKYQFGQYAWTHMILIVVFTQSSFTVANIFEGIFWFLLPASLIIINDIFAYIFGFFFGRTPLIKLSPKKTWEGFIGASVTTIISAFVLANILGRFPWLTCPRQDLSTGWLQCDADPLFKPEPFALPAWIPEWFPWKEMTILPVQWHALCLGLFASIIAPFGGFFASGFKRAFKIKDFGDSIPGHGGITDRMDCQMVMAVFAYIYLQSFIVSQSVSVDKILDQILTNLTFEEQQALFVKLGQMLKDKLS.

At M1 the chain carries N-acetylmethionine. The span at 1 to 12 (MEEENVTSSPST) shows a compositional bias: polar residues. Positions 1-26 (MEEENVTSSPSTPVHRLRHRRRSNEV) are disordered. Transmembrane regions (helical) follow at residues 60–80 (IGGF…MVVV), 102–122 (LPYI…FVYG), 149–169 (YHMA…ILTL), 183–203 (WTHM…ANIF), 206–226 (IFWF…AYIF), 246–266 (GFIG…NILG), 321–341 (LCLG…ASGF), and 369–389 (VMAV…SVSV).

The protein belongs to the CDS family. It depends on Mg(2+) as a cofactor.

Its subcellular location is the membrane. The enzyme catalyses a 1,2-diacyl-sn-glycero-3-phosphate + CTP + H(+) = a CDP-1,2-diacyl-sn-glycerol + diphosphate. Its pathway is phospholipid metabolism; CDP-diacylglycerol biosynthesis; CDP-diacylglycerol from sn-glycerol 3-phosphate: step 3/3. May be involved in the synthesis of minor phospholipids and in modulation of IP3-mediated signal transduction. The protein is Phosphatidate cytidylyltransferase 1 of Arabidopsis thaliana (Mouse-ear cress).